The sequence spans 470 residues: Ribosomal protein uS12 methylthiotransferase RimO (470 aa).

Residues 4 to 120 (TRVYLHTLGC…IARVVSDAQA (117 aa)) enclose the MTTase N-terminal domain. Positions 13, 49, 83, 155, 159, and 162 each coordinate [4Fe-4S] cluster. The 231-residue stretch at 141–371 (SLPSHTAYLK…MALQQEISRE (231 aa)) folds into the Radical SAM core domain. A TRAM domain is found at 374-442 (RAMVGRRLEV…EYDLVGHVVA (69 aa)). The interval 447-470 (RARRPLPAPAGGETPRRGGLPVVG) is disordered.

It belongs to the methylthiotransferase family. RimO subfamily. Requires [4Fe-4S] cluster as cofactor.

The protein resides in the cytoplasm. It carries out the reaction L-aspartate(89)-[ribosomal protein uS12]-hydrogen + (sulfur carrier)-SH + AH2 + 2 S-adenosyl-L-methionine = 3-methylsulfanyl-L-aspartate(89)-[ribosomal protein uS12]-hydrogen + (sulfur carrier)-H + 5'-deoxyadenosine + L-methionine + A + S-adenosyl-L-homocysteine + 2 H(+). In terms of biological role, catalyzes the methylthiolation of an aspartic acid residue of ribosomal protein uS12. In Anaeromyxobacter sp. (strain Fw109-5), this protein is Ribosomal protein uS12 methylthiotransferase RimO.